We begin with the raw amino-acid sequence, 323 residues long: MTLRAVVTGVGHYLPDRIVPNSEFEKTLDTNDEWIRARSGIERRHFAAEGETTASMAAAASRAALSMAGAEAQDVDAIIVATSTADLTFPSAATMVQAELGMTRGFAFDVQAVCAGFVFALSNANALILSGQARRVLVIGAEAFSRIMDWTDRSTCVLFGDGAGAVLLEAQDGTGTSADRGILSTDLNSDGRHKDLLYVDGGVSTGTTGYLRMQGNQVFRHAVEKLAATATTALERAGVSASDVDWVVPHQANIRIIQGTAKKLGVSMDRVVVTVQDHGNTSAASIPLALSVGHARGQIKQGDLVVTEAIGGGLAWGAVVLRW.

Residues C114 and H250 contribute to the active site. An ACP-binding region spans residues 251-255 (QANIR). N280 is a catalytic residue.

Belongs to the thiolase-like superfamily. FabH family. In terms of assembly, homodimer.

The protein localises to the cytoplasm. It carries out the reaction malonyl-[ACP] + acetyl-CoA + H(+) = 3-oxobutanoyl-[ACP] + CO2 + CoA. The protein operates within lipid metabolism; fatty acid biosynthesis. Its function is as follows. Catalyzes the condensation reaction of fatty acid synthesis by the addition to an acyl acceptor of two carbons from malonyl-ACP. Catalyzes the first condensation reaction which initiates fatty acid synthesis and may therefore play a role in governing the total rate of fatty acid production. Possesses both acetoacetyl-ACP synthase and acetyl transacylase activities. Its substrate specificity determines the biosynthesis of branched-chain and/or straight-chain of fatty acids. The sequence is that of Beta-ketoacyl-[acyl-carrier-protein] synthase III from Roseobacter denitrificans (strain ATCC 33942 / OCh 114) (Erythrobacter sp. (strain OCh 114)).